Reading from the N-terminus, the 260-residue chain is 23S rRNA (guanosine-2'-O-)-methyltransferase RlmB (260 aa).

G197, I217, and L226 together coordinate S-adenosyl-L-methionine.

It belongs to the class IV-like SAM-binding methyltransferase superfamily. RNA methyltransferase TrmH family. RlmB subfamily.

It is found in the cytoplasm. The enzyme catalyses guanosine(2251) in 23S rRNA + S-adenosyl-L-methionine = 2'-O-methylguanosine(2251) in 23S rRNA + S-adenosyl-L-homocysteine + H(+). Functionally, specifically methylates the ribose of guanosine 2251 in 23S rRNA. The chain is 23S rRNA (guanosine-2'-O-)-methyltransferase RlmB from Nitrosomonas europaea (strain ATCC 19718 / CIP 103999 / KCTC 2705 / NBRC 14298).